Reading from the N-terminus, the 177-residue chain is Superoxide dismutase [Cu-Zn] 1 (177 aa).

Positions 1–20 (MKYTILSLVAGALISCSAMA) are cleaved as a signal peptide. Residues H69, H71, and H94 each coordinate Cu cation. Cysteines 76 and 172 form a disulfide. Residues H94, H103, H112, and D115 each coordinate Zn(2+). Residue H150 participates in Cu cation binding.

It belongs to the Cu-Zn superoxide dismutase family. Monomer. It depends on Cu cation as a cofactor. The cofactor is Zn(2+).

The protein localises to the periplasm. The enzyme catalyses 2 superoxide + 2 H(+) = H2O2 + O2. In terms of biological role, destroys radicals which are normally produced within the cells and which are toxic to biological systems. In Salmonella typhimurium (strain 4/74), this protein is Superoxide dismutase [Cu-Zn] 1 (sodC1).